The following is a 38-amino-acid chain: RapG inhibitor (38 aa).

A propeptide spanning residues 1–33 (MKRFLIGAGVAAVILSGWFIADHQTHSQEMKVA) is cleaved from the precursor.

This sequence belongs to the Phr family. Contains a predicted signal peptide cleavage site in the N-terminal region, however the propeptide is probably subject to only one processing event, at the N-terminal end of the mature peptide.

The protein localises to the secreted. Its subcellular location is the cytoplasm. Functionally, signaling molecule involved in the regulation of expression of DegU-controlled genes. Secreted during production, but the mature peptide acts intracellularly, indicating that it needs to be imported into the cell to function. Stimulates the DegU-dependent expression of aprE, an extracellular alkaline protease. Acts by inhibiting RapG activity. At high concentrations, represses the DegS-dependent aprE expression. The sequence is that of RapG inhibitor (phrG) from Bacillus subtilis (strain 168).